The primary structure comprises 459 residues: Zinc finger and BTB domain-containing protein 9 (459 aa).

In terms of domain architecture, BTB spans 48-112 (CDVSLLVQGR…IYSGSLHLPL (65 aa)). Positions 178-189 (VRSSASTENSVL) are enriched in polar residues. Disordered regions lie at residues 178 to 200 (VRSS…EGSE) and 212 to 274 (EEEE…ASQI). Glycyl lysine isopeptide (Lys-Gly) (interchain with G-Cter in SUMO2) cross-links involve residues Lys-285, Lys-293, and Lys-368. The segment at 293–356 (KEKTKVLSGE…GGTGQAMHGP (64 aa)) is disordered. Residues 397–419 (FGCGICNKRFKLKHHLTEHMKTH) form a C2H2-type 1 zinc finger. The segment at 424-446 (HACPHCGRRFRVQAFFLRHRDLC) adopts a C2H2-type 2; atypical zinc-finger fold.

It localises to the nucleus. In terms of biological role, may be involved in transcriptional regulation. The chain is Zinc finger and BTB domain-containing protein 9 (Zbtb9) from Mus musculus (Mouse).